The following is a 156-amino-acid chain: ATP synthase subunit b (156 aa).

Residues 7–26 form a helical membrane-spanning segment; sequence ILGQAIAFVLFVWFCMKYVW.

This sequence belongs to the ATPase B chain family. As to quaternary structure, F-type ATPases have 2 components, F(1) - the catalytic core - and F(0) - the membrane proton channel. F(1) has five subunits: alpha(3), beta(3), gamma(1), delta(1), epsilon(1). F(0) has three main subunits: a(1), b(2) and c(10-14). The alpha and beta chains form an alternating ring which encloses part of the gamma chain. F(1) is attached to F(0) by a central stalk formed by the gamma and epsilon chains, while a peripheral stalk is formed by the delta and b chains.

It is found in the cell inner membrane. Functionally, f(1)F(0) ATP synthase produces ATP from ADP in the presence of a proton or sodium gradient. F-type ATPases consist of two structural domains, F(1) containing the extramembraneous catalytic core and F(0) containing the membrane proton channel, linked together by a central stalk and a peripheral stalk. During catalysis, ATP synthesis in the catalytic domain of F(1) is coupled via a rotary mechanism of the central stalk subunits to proton translocation. Component of the F(0) channel, it forms part of the peripheral stalk, linking F(1) to F(0). In Pectobacterium atrosepticum (strain SCRI 1043 / ATCC BAA-672) (Erwinia carotovora subsp. atroseptica), this protein is ATP synthase subunit b.